Here is a 264-residue protein sequence, read N- to C-terminus: MKAVLLVVAALFLAGSQARHFWQQDDPKTSWDVVKEFANKYVDAVKESGKGYVEQLDASSLGQQLNLRLSDNWDTLSTILTKLQADFGLATQEFWDTLEKETEWLKQIVSEDLQDVKHKVQPYLENFQKKVQEEVERYREKVRPLGIELRDGARQKLQELQEKLTPLGEDLRDRTREHVDVLRTQLAPFSEEMRQRLAKRLEELKDSATLADYHAKASEHLKMLGEKAKPALEDLRQGLLPVLENLKASILSSIDQASKQLAAQ.

The first 18 residues, 1–18 (MKAVLLVVAALFLAGSQA), serve as a signal peptide directing secretion. 2 tandem repeats follow at residues 67-88 (LRLS…ADFG) and 89-110 (LATQ…QIVS). The segment at 67 to 264 (LRLSDNWDTL…DQASKQLAAQ (198 aa)) is 10 X approximate tandem repeats. A 3; half-length repeat occupies 111–121 (EDLQDVKHKVQ). 3 consecutive repeat copies span residues 122–143 (PYLE…EKVR), 144–165 (PLGI…EKLT), and 166–187 (PLGE…TQLA). Residues 188–207 (PFSEEMRQRLAKRLEELKDS) form a 7; truncated repeat. M193 is modified (methionine sulfoxide). Copy 8 of the repeat occupies 208-229 (ATLADYHAKASEHLKMLGEKAK). The stretch at 230–240 (PALEDLRQGLL) is one 9; half-length repeat. The stretch at 241–264 (PVLENLKASILSSIDQASKQLAAQ) is repeat 10.

It belongs to the apolipoprotein A1/A4/E family. In terms of assembly, homodimer. Interacts with APOA1BP and CLU. Component of a sperm activating protein complex (SPAP), consisting of APOA1, an immunoglobulin heavy chain, an immunoglobulin light chain and albumin. Interacts with NDRG1. Interacts with SCGB3A2. Interacts with NAXE and YJEFN3. Glycosylated. In terms of processing, palmitoylated. Post-translationally, phosphorylation sites are present in the extracellular medium.

Its subcellular location is the secreted. Its function is as follows. Participates in the reverse transport of cholesterol from tissues to the liver for excretion by promoting cholesterol efflux from tissues and by acting as a cofactor for the lecithin cholesterol acyltransferase (LCAT). As part of the SPAP complex, activates spermatozoa motility. The sequence is that of Apolipoprotein A-I (APOA1) from Cavia aperea (Brazilian guinea pig).